The primary structure comprises 282 residues: NADPH-dependent 7-cyano-7-deazaguanine reductase (282 aa).

Residue 88–90 (IES) coordinates substrate. 90 to 91 (SK) is an NADPH binding site. C190 serves as the catalytic Thioimide intermediate. Residue D197 is the Proton donor of the active site. Residue 229–230 (HE) participates in substrate binding. 258–259 (RG) serves as a coordination point for NADPH.

This sequence belongs to the GTP cyclohydrolase I family. QueF type 2 subfamily. As to quaternary structure, homodimer.

The protein localises to the cytoplasm. The enzyme catalyses 7-aminomethyl-7-carbaguanine + 2 NADP(+) = 7-cyano-7-deazaguanine + 2 NADPH + 3 H(+). It functions in the pathway tRNA modification; tRNA-queuosine biosynthesis. Its function is as follows. Catalyzes the NADPH-dependent reduction of 7-cyano-7-deazaguanine (preQ0) to 7-aminomethyl-7-deazaguanine (preQ1). The polypeptide is NADPH-dependent 7-cyano-7-deazaguanine reductase (Pectobacterium carotovorum subsp. carotovorum (strain PC1)).